The following is a 227-amino-acid chain: N-(5'-phosphoribosyl)anthranilate isomerase (227 aa).

It belongs to the TrpF family.

The catalysed reaction is N-(5-phospho-beta-D-ribosyl)anthranilate = 1-(2-carboxyphenylamino)-1-deoxy-D-ribulose 5-phosphate. It functions in the pathway amino-acid biosynthesis; L-tryptophan biosynthesis; L-tryptophan from chorismate: step 3/5. This chain is N-(5'-phosphoribosyl)anthranilate isomerase, found in Herminiimonas arsenicoxydans.